We begin with the raw amino-acid sequence, 331 residues long: 6-phosphogluconolactonase (331 aa).

The protein belongs to the cycloisomerase 2 family.

It carries out the reaction 6-phospho-D-glucono-1,5-lactone + H2O = 6-phospho-D-gluconate + H(+). It functions in the pathway carbohydrate degradation; pentose phosphate pathway; D-ribulose 5-phosphate from D-glucose 6-phosphate (oxidative stage): step 2/3. Catalyzes the hydrolysis of 6-phosphogluconolactone to 6-phosphogluconate. The polypeptide is 6-phosphogluconolactonase (Salmonella choleraesuis (strain SC-B67)).